The chain runs to 888 residues: MQTHEIRRRFLDHFVRAGHTEVPSASLILADPNLLFVNAGMVQFKPYFLGQEAPPYPRATSVQKCVRTGDIEEVGVTTRHNTFFQMAGNFSFGDYFKEGAITLAWELISKPQSEGGFGFDPERIWVTAYQDDPEAAEIWHRMAGIPKERIQFRDGKDNYWDMGVPGPGGPCSEIYFDRGPAYGKDGGPVADEDRYLEIWNLVFMQDVRGELSPKQGHPPIGSLPKKNIDTGMGIERVAMLLQGVDNVYETDLLRPIIGKAEELTGRRYGAEHASDVRFRVIADHARTAAMLISDGVNPGNDGRGYVLRRLLRRIVRSARLLGAEKPVMAEFMQVVSDLMSPSYPELATDFDRIRTVAVGEETAFLKTLTTGSTLFDNTAAAVKAKGGTKIAGADAFTLHDTYGFPIDLTLEMAAEAGLSVDEEGFRSLMAEQRRRAKEDAAARKHAHADLSIYKELVDRGATEFTGFDELTSEAHVLALIADGVRVPTATQGQDVEVILDRSPLYAESGGQIADRGSITASGLKLRVNDVQKIAKKLWVHKTTVEQGQITEGDVVLAQADPAWRRGATQGHSGTHMVHAALRQVLGPNAVQAGSLNKPGYLRFDFNWQGQLSEQQKADIEAVSNDAVGADFPVNTFVTDLPKAKQMGALALFGENYGDEVRVVEIGGPFSMELCGGTHVQHSSQIGPITLLGESSVGSGVRRVEAFVGLDSYKYLAKERALLAGVASSLKVPSEEVPARVEQLVERLKVAEKELERTKIAAVLSSAGKFVEEAERVGRVLLVAAAAPEGVAAGDLRTLATDIRGRFGSEPAVVVLLGNADGKVPFVVAVNKSAQEIGVKAGELVGSFGPSIAGRGGGKPEMAQGAGSDPSGIPAGLAAVRARVAEIAG.

His-571, His-575, Cys-674, and His-678 together coordinate Zn(2+).

Belongs to the class-II aminoacyl-tRNA synthetase family. Zn(2+) is required as a cofactor.

Its subcellular location is the cytoplasm. It catalyses the reaction tRNA(Ala) + L-alanine + ATP = L-alanyl-tRNA(Ala) + AMP + diphosphate. Catalyzes the attachment of alanine to tRNA(Ala) in a two-step reaction: alanine is first activated by ATP to form Ala-AMP and then transferred to the acceptor end of tRNA(Ala). Also edits incorrectly charged Ser-tRNA(Ala) and Gly-tRNA(Ala) via its editing domain. The chain is Alanine--tRNA ligase from Nocardia farcinica (strain IFM 10152).